We begin with the raw amino-acid sequence, 333 residues long: MRTHGLRLVLLALLPTMALGLLEGLYCGKENCYDVLGVTRESSKSEIGKAYRQLARRYHPDLHRGAEAKAAAETQFKLVATAYEILRDEESRTDYDYMLDNPDAYYAHYYRYYRRRVAPKVDVRVVIVVVLTIVSVIQYYSGWQRYDSAIKYFATVPKYRNQALEIARDEIQEKIQKKGKNRMSKNDQRDELERIIRRVIEEKMDVKGGYAKPTLWDVLWVQLIICPYTILSFIVWHAQWFWRYTVMKQPYGREQKLYLIRRHLGMGQHQFEAQEDKLIEEYLHLKLWKRENFVAWKAEQEEEMKKKLAENPRYKAYRRYMKNHGPGRITFED.

Residues 8-28 (LVLLALLPTMALGLLEGLYCG) form a helical membrane-spanning segment. The 69-residue stretch at 31 to 99 (NCYDVLGVTR…ESRTDYDYML (69 aa)) folds into the J domain. The chain crosses the membrane as a helical span at residues 123–143 (VRVVIVVVLTIVSVIQYYSGW). Residues 158-208 (KYRNQALEIARDEIQEKIQKKGKNRMSKNDQRDELERIIRRVIEEKMDVKG) adopt a coiled-coil conformation. A helical membrane pass occupies residues 218–238 (VLWVQLIICPYTILSFIVWHA).

This sequence belongs to the DNAJC25 family.

It is found in the membrane. This Drosophila melanogaster (Fruit fly) protein is DnaJ homolog subfamily C member 25 homolog.